Here is a 238-residue protein sequence, read N- to C-terminus: tRNA (guanine-N(7)-)-methyltransferase (238 aa).

Positions 68, 93, 120, and 143 each coordinate S-adenosyl-L-methionine. Aspartate 143 is a catalytic residue. Residues lysine 147, aspartate 179, and 216–219 each bind substrate; that span reads TKFE.

Belongs to the class I-like SAM-binding methyltransferase superfamily. TrmB family.

The catalysed reaction is guanosine(46) in tRNA + S-adenosyl-L-methionine = N(7)-methylguanosine(46) in tRNA + S-adenosyl-L-homocysteine. Its pathway is tRNA modification; N(7)-methylguanine-tRNA biosynthesis. Functionally, catalyzes the formation of N(7)-methylguanine at position 46 (m7G46) in tRNA. In Shewanella amazonensis (strain ATCC BAA-1098 / SB2B), this protein is tRNA (guanine-N(7)-)-methyltransferase.